A 547-amino-acid polypeptide reads, in one-letter code: Elongator complex protein 3 (547 aa).

Positions 82–372 (RTASGIAVVA…YRVQRDIPMP (291 aa)) constitute a Radical SAM core domain. [4Fe-4S] cluster is bound by residues Cys-99, Cys-109, and Cys-112. The residue at position 161 (Ser-161) is a Phosphoserine. Lys-164 is an acetyl-CoA binding site. N6-methyllysine is present on Lys-229. Tyr-251 carries the phosphotyrosine modification. Residues 396–547 (IQCRDVRTRE…QGPYMVKMLK (152 aa)) form the N-acetyltransferase domain. Residues 474 to 477 (ELHV), 497 to 499 (FGM), and Tyr-530 each bind acetyl-CoA.

The protein belongs to the ELP3 family. As to quaternary structure, component of the elongator complex which consists of ELP1, ELP2, ELP3, ELP4, ELP5 and ELP6. ELP1, ELP2 and ELP3 form the elongator core complex. Interacts with alpha-tubulin. The cofactor is [4Fe-4S] cluster. Tyrosine-phosphorylated. Also serine/threonine-phosphorylated.

The protein resides in the cytoplasm. Its subcellular location is the nucleus. It carries out the reaction uridine(34) in tRNA + acetyl-CoA + S-adenosyl-L-methionine + H2O = 5-(carboxymethyl)uridine(34) in tRNA + 5'-deoxyadenosine + L-methionine + CoA + 2 H(+). It participates in tRNA modification; 5-methoxycarbonylmethyl-2-thiouridine-tRNA biosynthesis. Catalytic tRNA acetyltransferase subunit of the elongator complex which is required for multiple tRNA modifications, including mcm5U (5-methoxycarbonylmethyl uridine), mcm5s2U (5-methoxycarbonylmethyl-2-thiouridine), and ncm5U (5-carbamoylmethyl uridine). In the elongator complex, acts as a tRNA uridine(34) acetyltransferase by mediating formation of carboxymethyluridine in the wobble base at position 34 in tRNAs. May also act as a protein lysine acetyltransferase by mediating acetylation of target proteins; such activity is however unclear in vivo and recent evidences suggest that ELP3 primarily acts as a tRNA acetyltransferase. Involved in neurogenesis: regulates the migration and branching of projection neurons in the developing cerebral cortex, through a process depending on alpha-tubulin acetylation. Required for acetylation of GJA1 in the developing cerebral cortex. The polypeptide is Elongator complex protein 3 (Mus musculus (Mouse)).